A 687-amino-acid polypeptide reads, in one-letter code: MNDKRKILITCALPYANGYIHLGHLVEYLQADFWARFQNMRGNECVFICADDTHGTPIMVKARELGITPEALIAQSYKEHTQDFADFQVQFSHFGSTNSEENRLLCEYFYKKMQEGNHTRSQPIQQMYCNHDKMFLPDRFVKGTCPKCGAKEQYGDSCDVCASTYSPSDMKDVHCSLCGTAPVMKDSESIFFKLNDFKQYLEEWIPKHCSPEISKKMLEWFNEDLKDLDISRDEPYFGFAIPGTNNKKFFYVWVDAPMGYMSTTEQWAKSQGKTLKDIWQDPSREIYHFIGKDIARFHTIFWPAFLKAAEFRSPNQVFVHGHLMVNGEKMSKSKGTFIAARTYLNHLNPEYLRYYYSTKLSSSVDDIDLNLEDFTNRVNSELVGKITNLGSRGGQMLKKKMDGKMSVPDAEGKKLIEHAQKTAESIAAHYEARDFAKALGEIRGLADDANKYFDEKAPWKTLEADPEGTKQVITTTLNMFRMLAIYLKPVLPFYSQKVAKLLGEKDYVWSDLNTVLTNREINDYEHLATRIEADKVKAMVEEGRKINEEIQAAKKAASTAKPAAAPAPAAAATAGDRPAEIEFADFDKVDLRIGQVIEAEEIKEADKLLRLKIDIGEGQIRQIISGIKAAYKPEQLVGRKVLVCVNLKPRKMKFGMSEGMVLAAGTGGSDLFVLSADDGAQVGQRVK.

The 'HIGH' region motif lies at 14–24 (PYANGYIHLGH). The Zn(2+) site is built by cysteine 145, cysteine 148, cysteine 158, and cysteine 161. The 'KMSKS' region motif lies at 329-333 (KMSKS). Lysine 332 is an ATP binding site. A tRNA-binding domain is found at 585–687 (DFDKVDLRIG…DGAQVGQRVK (103 aa)).

This sequence belongs to the class-I aminoacyl-tRNA synthetase family. MetG type 1 subfamily. As to quaternary structure, homodimer. Zn(2+) is required as a cofactor.

The protein resides in the cytoplasm. It carries out the reaction tRNA(Met) + L-methionine + ATP = L-methionyl-tRNA(Met) + AMP + diphosphate. Functionally, is required not only for elongation of protein synthesis but also for the initiation of all mRNA translation through initiator tRNA(fMet) aminoacylation. This Bdellovibrio bacteriovorus (strain ATCC 15356 / DSM 50701 / NCIMB 9529 / HD100) protein is Methionine--tRNA ligase.